Reading from the N-terminus, the 450-residue chain is MSRRYFGTDGIRGRANGLITPELALKVGQAAGLVFQRGDHRHRVVIGKDTRLSGYMIENAMVAGFTSVGMDVLLVGPMPTPAVAMLTKSMRADLGVMISASHNMFEDNGIKLFGPLGFKLSDDVEKQIEQLLDEPMDKKLSESASLGRARRIDGVHDRYIEFAKRTLPRDLSLDGLRVVVDCANGAAYKVVPEALWELGADVISIGVEPDGFNINKECGSTSPEALCRKVREMRADIGIALDGDADRVIMVDERGHVIDGDQLLAVIAQSWKEDGRLARPGIVATVMSNLGLERFLASEGIELVRTSVGDRYVLEAMLRDGYNVGGEASGHIILSDYATTGDGFVAALQILAVVQKLGRPVSEVCHRFDPLPQILKNVRYRAGRPLDDAGVQSAISDAEKRLNGHGRLLIRPSGTEPVIRVMGEGEDRIMVEEVVDTIVDALGNASAAAA.

Catalysis depends on S101, which acts as the Phosphoserine intermediate. Mg(2+) contacts are provided by S101, D242, D244, and D246. The residue at position 101 (S101) is a Phosphoserine.

This sequence belongs to the phosphohexose mutase family. Mg(2+) is required as a cofactor. Post-translationally, activated by phosphorylation.

The catalysed reaction is alpha-D-glucosamine 1-phosphate = D-glucosamine 6-phosphate. Functionally, catalyzes the conversion of glucosamine-6-phosphate to glucosamine-1-phosphate. This Rhodopseudomonas palustris (strain HaA2) protein is Phosphoglucosamine mutase.